Consider the following 370-residue polypeptide: Homoserine kinase (370 aa).

The N-terminal 34 residues, 1–34 (MASLCFQSPSKPISYFQPKSNPSPPLFAKVSVFR), are a transit peptide targeting the chloroplast. ATP is bound at residue 143–154 (LPLGSGLGSSAA).

Belongs to the GHMP kinase family. Homoserine kinase subfamily.

It is found in the plastid. It localises to the chloroplast stroma. It catalyses the reaction L-homoserine + ATP = O-phospho-L-homoserine + ADP + H(+). The protein operates within amino-acid biosynthesis; L-threonine biosynthesis; L-threonine from L-aspartate: step 4/5. Functionally, catalyzes the ATP-dependent phosphorylation of L-homoserine to L-homoserine phosphate. Is specific for L-homoserine and cannot use other substrates such D-serine, L-serine, D-threonine and L-threonine, galactose or D-homoserine in vitro. Required for susceptibility to the downy mildew pathogen Hyaloperonospora parasitica. This chain is Homoserine kinase (HSK), found in Arabidopsis thaliana (Mouse-ear cress).